The sequence spans 217 residues: Uridylate kinase (217 aa).

6–10 contributes to the ATP binding site; sequence KISGR. Position 38 (Gly38) interacts with UMP. The ATP site is built by Gly39 and Arg43. Residues Asp60 and 107–113 contribute to the UMP site; that span reads FQPGQST. Positions 134, 139, and 142 each coordinate ATP.

This sequence belongs to the UMP kinase family. Homohexamer.

Its subcellular location is the cytoplasm. It carries out the reaction UMP + ATP = UDP + ADP. It functions in the pathway pyrimidine metabolism; CTP biosynthesis via de novo pathway; UDP from UMP (UMPK route): step 1/1. With respect to regulation, inhibited by UTP. Functionally, catalyzes the reversible phosphorylation of UMP to UDP. In Pyrobaculum arsenaticum (strain DSM 13514 / JCM 11321 / PZ6), this protein is Uridylate kinase.